Reading from the N-terminus, the 264-residue chain is Thymidylate synthase (264 aa).

R21 serves as a coordination point for dUMP. H51 contributes to the (6R)-5,10-methylene-5,6,7,8-tetrahydrofolate binding site. Residue 126-127 (RR) participates in dUMP binding. The Nucleophile role is filled by C146. Residues 166 to 169 (RSCD), N177, and 207 to 209 (HLY) each bind dUMP. D169 serves as a coordination point for (6R)-5,10-methylene-5,6,7,8-tetrahydrofolate. A263 contributes to the (6R)-5,10-methylene-5,6,7,8-tetrahydrofolate binding site.

It belongs to the thymidylate synthase family. Bacterial-type ThyA subfamily. Homodimer.

Its subcellular location is the cytoplasm. The catalysed reaction is dUMP + (6R)-5,10-methylene-5,6,7,8-tetrahydrofolate = 7,8-dihydrofolate + dTMP. Its pathway is pyrimidine metabolism; dTTP biosynthesis. In terms of biological role, catalyzes the reductive methylation of 2'-deoxyuridine-5'-monophosphate (dUMP) to 2'-deoxythymidine-5'-monophosphate (dTMP) while utilizing 5,10-methylenetetrahydrofolate (mTHF) as the methyl donor and reductant in the reaction, yielding dihydrofolate (DHF) as a by-product. This enzymatic reaction provides an intracellular de novo source of dTMP, an essential precursor for DNA biosynthesis. The protein is Thymidylate synthase of Escherichia coli (strain 55989 / EAEC).